A 250-amino-acid polypeptide reads, in one-letter code: NADH-quinone oxidoreductase subunit C (250 aa).

Disordered regions lie at residues 1 to 33 (MSDDSSDVKPGPKGPEQPAVEQSPENVPAPTGE) and 228 to 250 (LGGVPVEYKGGTVPPPDQRRSYN).

This sequence belongs to the complex I 30 kDa subunit family. In terms of assembly, NDH-1 is composed of 14 different subunits. Subunits NuoB, C, D, E, F, and G constitute the peripheral sector of the complex.

It localises to the cell membrane. The enzyme catalyses a quinone + NADH + 5 H(+)(in) = a quinol + NAD(+) + 4 H(+)(out). NDH-1 shuttles electrons from NADH, via FMN and iron-sulfur (Fe-S) centers, to quinones in the respiratory chain. The immediate electron acceptor for the enzyme in this species is believed to be a menaquinone. Couples the redox reaction to proton translocation (for every two electrons transferred, four hydrogen ions are translocated across the cytoplasmic membrane), and thus conserves the redox energy in a proton gradient. The chain is NADH-quinone oxidoreductase subunit C from Nocardioides sp. (strain ATCC BAA-499 / JS614).